The sequence spans 504 residues: Maturase K (504 aa).

Belongs to the intron maturase 2 family. MatK subfamily.

It is found in the plastid. Its subcellular location is the chloroplast. Functionally, usually encoded in the trnK tRNA gene intron. Probably assists in splicing its own and other chloroplast group II introns. The sequence is that of Maturase K from Prionotes cerinthoides (Climbing heath).